The chain runs to 213 residues: Putative 3-methyladenine DNA glycosylase (213 aa).

The protein belongs to the DNA glycosylase MPG family.

This Leifsonia xyli subsp. xyli (strain CTCB07) protein is Putative 3-methyladenine DNA glycosylase.